A 371-amino-acid polypeptide reads, in one-letter code: Phospholipid-transporting ATPase accessory subunit ivn1 (371 aa).

Residues 1-39 lie on the Cytoplasmic side of the membrane; that stretch reads MSQTEIVKKPKHKRFKRPDKSRFVQQTLPAWQFIFTPWT. Residues 40-60 form a helical membrane-spanning segment; sequence VLPLLFLLGIVFAPLGAGMFV. The Extracellular portion of the chain corresponds to 61-325; it reads ASRRVKELRI…STTSVIGGKN (265 aa). 2 cysteine pairs are disulfide-bonded: C75/C111 and C166/C181. N-linked (GlcNAc...) asparagine glycosylation is present at N99. N190, N212, N216, N233, N284, and N297 each carry an N-linked (GlcNAc...) asparagine glycan. Residues 326–346 traverse the membrane as a helical segment; it reads YFLGILYFVIGGLCAASGVIL. Topologically, residues 347-371 are cytoplasmic; sequence SIACLIKPRRVGDPRYLSWNRGKSS.

It belongs to the CDC50/LEM3 family.

Its subcellular location is the endoplasmic reticulum membrane. Accessory component of a P4-ATPase flippase complex which catalyzes the hydrolysis of ATP coupled to the transport of aminophospholipids from the lumenal to the cytosolic leaflet of membranes and ensures the maintenance of asymmetric distribution of phospholipids. This Schizosaccharomyces pombe (strain 972 / ATCC 24843) (Fission yeast) protein is Phospholipid-transporting ATPase accessory subunit ivn1 (ivn1).